Consider the following 339-residue polypeptide: N-acetyl-gamma-glutamyl-phosphate reductase 1 (339 aa).

The active site involves cysteine 149.

Belongs to the NAGSA dehydrogenase family. Type 1 subfamily.

The protein localises to the cytoplasm. It catalyses the reaction N-acetyl-L-glutamate 5-semialdehyde + phosphate + NADP(+) = N-acetyl-L-glutamyl 5-phosphate + NADPH + H(+). It participates in amino-acid biosynthesis; L-arginine biosynthesis; N(2)-acetyl-L-ornithine from L-glutamate: step 3/4. Its function is as follows. Catalyzes the NADPH-dependent reduction of N-acetyl-5-glutamyl phosphate to yield N-acetyl-L-glutamate 5-semialdehyde. The protein is N-acetyl-gamma-glutamyl-phosphate reductase 1 of Lactiplantibacillus plantarum (strain ATCC BAA-793 / NCIMB 8826 / WCFS1) (Lactobacillus plantarum).